A 910-amino-acid polypeptide reads, in one-letter code: MVSLGGLARKVFGSSNDRRVKSTRPRVEAINAMENEMRALSDTELAGRTEKFRQDIANGASLDDLLVPAFATAREAARRVLGMRPFDVQLIGGMVLHNGGIAEMRTGEGKTLVATLPVYLNALAGKGVHVVTVNDYLATRDSEWMGRVYKFLGLSVGVIVHGLSDEERRVAYASDVTYATNNELGFDYLRDNMKYERAQMVQRGHNYAIVDEVDSILVDEARTPLIISGPLEDRSEMYNTIDTFIIQLQPQDYEIDEKQKTSIFTEEGTEKLENLLRDADLLKGESLYDVENVAIVHHVNNALKAHRLFQKDKDYIVRNGEIVIIDEFTGRMMPGRRYSEGLHQALEAKEHVAIQPENQTLASVTFQNYFRLYKKLSGMTGTALTEAEEFGNIYGLEVTEIPTNLPVIRKDEDDEVYRTVEEKYKAIVKEIREASAKGQPTLVGTTSIEKSEQLADRLRKEGFKDFEVLNARHHEREAAIVAQAGKPGAITIATNMAGRGTDIKLGGNAEMRIADELGDMPEGPEREAREKEIIADVERLKEKALAAGGLYVLATERHESRRIDNQLRGRSGRQGDPGRSKFFLSLQDDLMRIFGSERMDGMLQKLGLKEDEAIIHPWINKALEKAQKKVEARNFDIRKNLLKYDDVSNDQRKVVFEQRIELMDGEGLSETIAEMREGVIDEIVAKAIPENAYAEQWDVAGLKAEVAEFLNLDLPVEDWAKEEGIAEDDIRERITQAADAAAKERAERFGPEVMNYVERSVVLQTLDHLWREHIVNLDHLRSVVGFRGYAQRDPLQEYKGEAFELFQAMLGNLRQAVTAQLMRVELVRQAAEAPPPEAPDMFGTHIDGTTGENDFEGGETALLVRQEQNAVVAPEDRDPNNQATWGKVGRNEACPCGSGKKYKHCHGAFA.

Residues glutamine 89, 107–111 (GEGKT), and aspartate 502 each bind ATP. Positions 894, 896, 905, and 906 each coordinate Zn(2+).

This sequence belongs to the SecA family. In terms of assembly, monomer and homodimer. Part of the essential Sec protein translocation apparatus which comprises SecA, SecYEG and auxiliary proteins SecDF-YajC and YidC. Zn(2+) serves as cofactor.

The protein resides in the cell inner membrane. It is found in the cytoplasm. The catalysed reaction is ATP + H2O + cellular proteinSide 1 = ADP + phosphate + cellular proteinSide 2.. Functionally, part of the Sec protein translocase complex. Interacts with the SecYEG preprotein conducting channel. Has a central role in coupling the hydrolysis of ATP to the transfer of proteins into and across the cell membrane, serving both as a receptor for the preprotein-SecB complex and as an ATP-driven molecular motor driving the stepwise translocation of polypeptide chains across the membrane. This chain is Protein translocase subunit SecA, found in Mesorhizobium japonicum (strain LMG 29417 / CECT 9101 / MAFF 303099) (Mesorhizobium loti (strain MAFF 303099)).